Here is a 108-residue protein sequence, read N- to C-terminus: Integration host factor subunit alpha (108 aa).

It belongs to the bacterial histone-like protein family. In terms of assembly, heterodimer of an alpha and a beta chain.

In terms of biological role, this protein is one of the two subunits of integration host factor, a specific DNA-binding protein that functions in genetic recombination as well as in transcriptional and translational control. The chain is Integration host factor subunit alpha from Methylorubrum extorquens (strain CM4 / NCIMB 13688) (Methylobacterium extorquens).